An 81-amino-acid polypeptide reads, in one-letter code: Sulfur carrier protein TusA (81 aa).

C19 functions as the Cysteine persulfide intermediate in the catalytic mechanism.

The protein belongs to the sulfur carrier protein TusA family.

The protein localises to the cytoplasm. In terms of biological role, sulfur carrier protein which probably makes part of a sulfur-relay system. The polypeptide is Sulfur carrier protein TusA (Shewanella sp. (strain ANA-3)).